The following is a 181-amino-acid chain: Large ribosomal subunit protein uL5 (181 aa).

This sequence belongs to the universal ribosomal protein uL5 family. Part of the 50S ribosomal subunit; part of the 5S rRNA/L5/L18/L25 subcomplex. Contacts the 5S rRNA and the P site tRNA. Forms a bridge to the 30S subunit in the 70S ribosome.

Its function is as follows. This is one of the proteins that bind and probably mediate the attachment of the 5S RNA into the large ribosomal subunit, where it forms part of the central protuberance. In the 70S ribosome it contacts protein S13 of the 30S subunit (bridge B1b), connecting the 2 subunits; this bridge is implicated in subunit movement. Contacts the P site tRNA; the 5S rRNA and some of its associated proteins might help stabilize positioning of ribosome-bound tRNAs. This chain is Large ribosomal subunit protein uL5, found in Helicobacter pylori (strain HPAG1).